A 178-amino-acid chain; its full sequence is uncharacterized protein (178 aa).

The protein belongs to the mimivirus L39/R874 family.

This is an uncharacterized protein from Acanthamoeba polyphaga (Amoeba).